Here is a 414-residue protein sequence, read N- to C-terminus: Serine/threonine transporter SstT (414 aa).

8 consecutive transmembrane segments (helical) span residues 16 to 36 (GSLV…AWVS), 46 to 66 (LGTL…LMLV), 84 to 104 (ILFL…VFSF), 143 to 163 (ALLN…GFAL), 180 to 200 (AVTF…FGLV), 219 to 239 (LVVL…LLVF), 300 to 320 (MAGA…TLGV), and 332 to 352 (VVAS…LLLI).

Belongs to the dicarboxylate/amino acid:cation symporter (DAACS) (TC 2.A.23) family.

The protein resides in the cell inner membrane. It catalyses the reaction L-serine(in) + Na(+)(in) = L-serine(out) + Na(+)(out). The enzyme catalyses L-threonine(in) + Na(+)(in) = L-threonine(out) + Na(+)(out). In terms of biological role, involved in the import of serine and threonine into the cell, with the concomitant import of sodium (symport system). The chain is Serine/threonine transporter SstT from Salmonella arizonae (strain ATCC BAA-731 / CDC346-86 / RSK2980).